The primary structure comprises 286 residues: Bifunctional protein FolD (286 aa).

Residues 168-170 (GRG), T195, and V236 each bind NADP(+).

The protein belongs to the tetrahydrofolate dehydrogenase/cyclohydrolase family. Homodimer.

It carries out the reaction (6R)-5,10-methylene-5,6,7,8-tetrahydrofolate + NADP(+) = (6R)-5,10-methenyltetrahydrofolate + NADPH. The catalysed reaction is (6R)-5,10-methenyltetrahydrofolate + H2O = (6R)-10-formyltetrahydrofolate + H(+). Its pathway is one-carbon metabolism; tetrahydrofolate interconversion. Catalyzes the oxidation of 5,10-methylenetetrahydrofolate to 5,10-methenyltetrahydrofolate and then the hydrolysis of 5,10-methenyltetrahydrofolate to 10-formyltetrahydrofolate. This is Bifunctional protein FolD from Mycolicibacterium fortuitum (Mycobacterium fortuitum).